The chain runs to 394 residues: NADH-quinone oxidoreductase subunit D 2 (394 aa).

The protein belongs to the complex I 49 kDa subunit family. In terms of assembly, NDH-1 is composed of 14 different subunits. Subunits NuoB, C, D, E, F, and G constitute the peripheral sector of the complex.

It localises to the cell membrane. The enzyme catalyses a quinone + NADH + 5 H(+)(in) = a quinol + NAD(+) + 4 H(+)(out). In terms of biological role, NDH-1 shuttles electrons from NADH, via FMN and iron-sulfur (Fe-S) centers, to quinones in the respiratory chain. The immediate electron acceptor for the enzyme in this species is believed to be a menaquinone. Couples the redox reaction to proton translocation (for every two electrons transferred, four hydrogen ions are translocated across the cytoplasmic membrane), and thus conserves the redox energy in a proton gradient. This Streptomyces griseus subsp. griseus (strain JCM 4626 / CBS 651.72 / NBRC 13350 / KCC S-0626 / ISP 5235) protein is NADH-quinone oxidoreductase subunit D 2.